Reading from the N-terminus, the 83-residue chain is Exodeoxyribonuclease 7 small subunit (83 aa).

Belongs to the XseB family. Heterooligomer composed of large and small subunits.

It localises to the cytoplasm. It catalyses the reaction Exonucleolytic cleavage in either 5'- to 3'- or 3'- to 5'-direction to yield nucleoside 5'-phosphates.. Its function is as follows. Bidirectionally degrades single-stranded DNA into large acid-insoluble oligonucleotides, which are then degraded further into small acid-soluble oligonucleotides. In Rhodopseudomonas palustris (strain ATCC BAA-98 / CGA009), this protein is Exodeoxyribonuclease 7 small subunit.